An 82-amino-acid polypeptide reads, in one-letter code: Myosin light chain alkali (82 aa).

The EF-hand domain maps to 7 to 42 (GCYGDFIECLKLYDKEENGTMMLAELQHALLALGES).

In terms of assembly, myosin is a hexamer of 2 heavy chains and 4 light chains.

This is Myosin light chain alkali (Mlc1) from Drosophila sechellia (Fruit fly).